A 198-amino-acid chain; its full sequence is Large ribosomal subunit protein bL25 (198 aa).

The protein belongs to the bacterial ribosomal protein bL25 family. CTC subfamily. Part of the 50S ribosomal subunit; part of the 5S rRNA/L5/L18/L25 subcomplex. Contacts the 5S rRNA. Binds to the 5S rRNA independently of L5 and L18.

Functionally, this is one of the proteins that binds to the 5S RNA in the ribosome where it forms part of the central protuberance. This chain is Large ribosomal subunit protein bL25, found in Azotobacter vinelandii (strain DJ / ATCC BAA-1303).